The following is a 523-amino-acid chain: WD repeat-containing protein WDS homolog (523 aa).

In terms of domain architecture, LisH spans 16-48; the sequence is KKHEFIRILVQCLYSLGFKNSASCLEFESKILY. A CTLH domain is found at 49–107; the sequence is KTADSEFLEKQVLSGNWDSCVQVLDRIFDNSMDDTRNTALYLVFKQCLLEYLKRGDVSL. 7 WD repeats span residues 222–261, 267–306, 310–353, 355–394, 395–434, 438–480, and 483–523; these read AHKN…KVEL, SHQN…LRHT, NNTG…KAWR, TRIP…ERVI, SEEQ…KQPL, GHRQ…PLEV, and GHSM…KPLN.

In terms of assembly, interacts with RANBPM.

The protein resides in the cytoplasm. This Arabidopsis thaliana (Mouse-ear cress) protein is WD repeat-containing protein WDS homolog.